The chain runs to 1615 residues: Mediator of RNA polymerase II transcription subunit 23 (1615 aa).

Disordered regions lie at residues R40–P67 and S1230–E1270. The segment covering Q41 to P51 has biased composition (basic and acidic residues). Positions S1230–S1241 are enriched in low complexity.

It belongs to the Mediator complex subunit 23 family. In terms of assembly, component of the Mediator complex.

It is found in the nucleus. Functionally, component of the Mediator complex, a coactivator involved in the regulated transcription of nearly all RNA polymerase II-dependent genes. Mediator functions as a bridge to convey information from gene-specific regulatory proteins to the basal RNA polymerase II transcription machinery. The Mediator complex, having a compact conformation in its free form, is recruited to promoters by direct interactions with regulatory proteins and serves for the assembly of a functional preinitiation complex with RNA polymerase II and the general transcription factors. The chain is Mediator of RNA polymerase II transcription subunit 23 (MED23) from Arabidopsis thaliana (Mouse-ear cress).